The primary structure comprises 217 residues: MKLGLIGKKVGMTRIFTESGSSVPVTVLDVSKNRVVQIKTAERDGYSAIQLTQGYRRKNRITKALSGHFARAGVEAGKVIKEFRIEQQAINSDLKLGSEINVEIFLTGSKVDVSGVSIGKGYAGTIKRHNFSSSRASHGNSRSHNVPGSIGMAQDPGRVFPGKKMTGRLGGVNSTIQNIEVVRVDTVRGLIFLKGSVPGSKGNGVFIRPSVKHANKQ.

The interval 131–155 (FSSSRASHGNSRSHNVPGSIGMAQD) is disordered. A compositionally biased stretch (low complexity) spans 132–145 (SSSRASHGNSRSHN). Residue Gln-154 is modified to N5-methylglutamine.

Belongs to the universal ribosomal protein uL3 family. As to quaternary structure, part of the 50S ribosomal subunit. Forms a cluster with proteins L14 and L19. Post-translationally, methylated by PrmB.

In terms of biological role, one of the primary rRNA binding proteins, it binds directly near the 3'-end of the 23S rRNA, where it nucleates assembly of the 50S subunit. In Nitrosomonas eutropha (strain DSM 101675 / C91 / Nm57), this protein is Large ribosomal subunit protein uL3.